Consider the following 299-residue polypeptide: Putative hydrolase YtaP (299 aa).

The protein belongs to the dienelactone hydrolase family.

In Bacillus subtilis (strain 168), this protein is Putative hydrolase YtaP (ytaP).